Here is a 331-residue protein sequence, read N- to C-terminus: 6-phosphogluconolactonase (331 aa).

An N6-acetyllysine modification is found at Lys287.

It belongs to the cycloisomerase 2 family.

The enzyme catalyses 6-phospho-D-glucono-1,5-lactone + H2O = 6-phospho-D-gluconate + H(+). Its pathway is carbohydrate degradation; pentose phosphate pathway; D-ribulose 5-phosphate from D-glucose 6-phosphate (oxidative stage): step 2/3. Catalyzes the hydrolysis of 6-phosphogluconolactone to 6-phosphogluconate. This chain is 6-phosphogluconolactonase, found in Escherichia coli O157:H7.